Consider the following 404-residue polypeptide: DNA replication and repair protein RecF (404 aa).

30–37 serves as a coordination point for ATP; the sequence is GSNGQGKT.

It belongs to the RecF family.

Its subcellular location is the cytoplasm. Its function is as follows. The RecF protein is involved in DNA metabolism; it is required for DNA replication and normal SOS inducibility. RecF binds preferentially to single-stranded, linear DNA. It also seems to bind ATP. This Clavibacter michiganensis subsp. michiganensis (strain NCPPB 382) protein is DNA replication and repair protein RecF.